The chain runs to 177 residues: Large ribosomal subunit protein uL6 (177 aa).

Belongs to the universal ribosomal protein uL6 family. As to quaternary structure, part of the 50S ribosomal subunit.

Its function is as follows. This protein binds to the 23S rRNA, and is important in its secondary structure. It is located near the subunit interface in the base of the L7/L12 stalk, and near the tRNA binding site of the peptidyltransferase center. In Hydrogenovibrio crunogenus (strain DSM 25203 / XCL-2) (Thiomicrospira crunogena), this protein is Large ribosomal subunit protein uL6.